A 103-amino-acid chain; its full sequence is Small ribosomal subunit protein uS10 (103 aa).

Belongs to the universal ribosomal protein uS10 family. In terms of assembly, part of the 30S ribosomal subunit.

Functionally, involved in the binding of tRNA to the ribosomes. This Acidovorax sp. (strain JS42) protein is Small ribosomal subunit protein uS10.